The chain runs to 105 residues: Large ribosomal subunit protein uL24 (105 aa).

It belongs to the universal ribosomal protein uL24 family. Part of the 50S ribosomal subunit.

Its function is as follows. One of two assembly initiator proteins, it binds directly to the 5'-end of the 23S rRNA, where it nucleates assembly of the 50S subunit. Functionally, one of the proteins that surrounds the polypeptide exit tunnel on the outside of the subunit. The polypeptide is Large ribosomal subunit protein uL24 (Cellvibrio japonicus (strain Ueda107) (Pseudomonas fluorescens subsp. cellulosa)).